A 63-amino-acid chain; its full sequence is MASVCEICAKGELSGNNVSHSHLKTRRTWKPNIQRVRAVVEGEVKRVNVCTRCLRSGKVQRAL.

It belongs to the bacterial ribosomal protein bL28 family.

The protein is Large ribosomal subunit protein bL28 (rpmB) of Selenomonas ruminantium.